Here is a 692-residue protein sequence, read N- to C-terminus: uncharacterized protein (692 aa).

The N-terminal 39 residues, Met1–Ser39, are a transit peptide targeting the chloroplast. The Protein kinase domain maps to Glu189–Leu523. Residues Val195 to Val203 and Lys218 contribute to the ATP site. Asp343 serves as the catalytic Proton acceptor.

This sequence belongs to the protein kinase superfamily. ADCK protein kinase family.

It is found in the plastid. The protein resides in the chloroplast. The protein localises to the plastoglobule. This is an uncharacterized protein from Arabidopsis thaliana (Mouse-ear cress).